The chain runs to 840 residues: MSVVGIDLGFQSCYVAVARAGGIETIANEYSDRCTPACISFGPKNRSIGAAAKSQVISNAKNTVQGFKRFHGRAFSDPFVEAEKSNLAYDIVQLPTGLTGIKVTYMEEERNFTTEQVTAMLLSKLKETAESVLKKPVVDCVVSVPCFYTDAERRSVMDATQIAGLNCLRLMNETTAVALAYGIYKQDLPALEEKPRNVVFVDMGHSAYQVSVCAFNRGKLKVLATAFDTTLGGRKFDEVLVNHFCEEFGKKYKLDIKSKIRALLRLSQECEKLKKLMSANASDLPLSIECFMNDVDVSGTMNRGKFLEMCNDLLARVEPPLRSVLEQTKLKKEDIYAVEIVGGATRIPAVKEKISKFFGKELSTTLNADEAVTRGCALQCAILSPAFKVREFSITDVVPYPISLRWNSPAEEGSSDCEVFSKNHAAPFSKVLTFYRKEPFTLEAYYSSPQDLPYPDPAIAQFSVQKVTPQSDGSSSKVKVKVRVNVHGIFSVSSASLVEVHKSEENEEPMETDQNAKEEEKMQVDQEEPHVEEQQQQTPAENKAESEEMETSQAGSKDKKMDQPPQAKKAKVKTSTVDLPIENQLLWQIDREMLNLYIENEGKMIMQDKLEKERNDAKNAVEEYVYEMRDKLSGEYEKFVSEDDRNSFTLKLEDTENWLYEDGEDQPKQVYVDKLAELKNLGQPIKIRFQESEERPKLFEELGKQIQQYMKIISSFKNKEDQYDHLDAADMTKVEKSTNEAMEWMNNKLNLQNKQSLTMDPVVKSKEIEAKIKELTSTCSPIISKPKPKVEPPKEEQKNAEQNGPVDGQGDNPGPQAAEQGTDTAVPSDSDKKLPEMDID.

An N6-acetyllysine modification is found at Lys-53. At Ser-76 the chain carries Phosphoserine. Phosphotyrosine is present on residues Tyr-89 and Tyr-336. Residues Ser-393 and Ser-415 each carry the phosphoserine modification. Lys-430 carries the N6-acetyllysine modification. The interval 500–575 (VHKSEENEEP…QAKKAKVKTS (76 aa)) is disordered. A compositionally biased stretch (basic and acidic residues) spans 514-533 (QNAKEEEKMQVDQEEPHVEE). Position 538 is a phosphothreonine (Thr-538). Phosphoserine occurs at positions 546 and 647. Tyr-660 is subject to Phosphotyrosine. Lys-679 carries the post-translational modification N6-acetyllysine. Residue Ser-756 is modified to Phosphoserine. Lys-773 is modified (N6-methyllysine). Positions 779 to 840 (CSPIISKPKP…DKKLPEMDID (62 aa)) are disordered. Composition is skewed to basic and acidic residues over residues 788–799 (PKVEPPKEEQKN) and 829–840 (DSDKKLPEMDID).

Belongs to the heat shock protein 70 family. Interacts with TJP1/ZO-1.

The protein localises to the cytoplasm. This chain is Heat shock 70 kDa protein 4 (HSPA4), found in Homo sapiens (Human).